The chain runs to 438 residues: 23S rRNA (uracil(1939)-C(5))-methyltransferase RlmD (438 aa).

Residues 9-68 (RRTVNRHIITVTADNLDAQGQGVARHQGKTIFVAGLLPGEQAQVQLTEEKRQFAKAKLVK) form the TRAM domain. Residues C81, C87, C90, and C168 each coordinate [4Fe-4S] cluster. S-adenosyl-L-methionine contacts are provided by Q272, F301, N306, E322, N349, and D370. C396 serves as the catalytic Nucleophile.

It belongs to the class I-like SAM-binding methyltransferase superfamily. RNA M5U methyltransferase family. RlmD subfamily.

The catalysed reaction is uridine(1939) in 23S rRNA + S-adenosyl-L-methionine = 5-methyluridine(1939) in 23S rRNA + S-adenosyl-L-homocysteine + H(+). Catalyzes the formation of 5-methyl-uridine at position 1939 (m5U1939) in 23S rRNA. The chain is 23S rRNA (uracil(1939)-C(5))-methyltransferase RlmD from Photorhabdus laumondii subsp. laumondii (strain DSM 15139 / CIP 105565 / TT01) (Photorhabdus luminescens subsp. laumondii).